Reading from the N-terminus, the 91-residue chain is MKTLFFFLTIAVLVSSCTSNIMTKSILEGKTQFSIPSLSSTIDPAYEHIGHFPDDMKIIFCQQCAFHCIEKKKNIPHCENSICRCTLENIL.

Residues 1 to 19 form the signal peptide; that stretch reads MKTLFFFLTIAVLVSSCTS. 3 cysteine pairs are disulfide-bonded: Cys-61–Cys-78, Cys-64–Cys-83, and Cys-68–Cys-85.

Belongs to the DEFL family.

It is found in the secreted. The polypeptide is Putative defensin-like protein 221 (Arabidopsis thaliana (Mouse-ear cress)).